Consider the following 1104-residue polypeptide: Extended synaptotagmin-1 (1104 aa).

M1 carries the N-acetylmethionine modification. Over 1–38 (MERSPGEGPSPSPTDQPSAPSDPTGQPPAAHAKPDPGS) the chain is Cytoplasmic. Residues 1-47 (MERSPGEGPSPSPTDQPSAPSDPTGQPPAAHAKPDPGSGGQPAGPGA) form a disordered region. Positions 15–24 (DQPSAPSDPT) are enriched in polar residues. Over residues 37–47 (GSGGQPAGPGA) the composition is skewed to gly residues. Residues 39–59 (GGQPAGPGAAGEALAVLTSFG) form a helical membrane-spanning segment. The Lumenal portion of the chain corresponds to 60-62 (KRL). The helical transmembrane segment at 63–83 (LVLIPVYLAGAVGLSVGFVLF) threads the bilayer. Residues 84–1104 (GLALYLGWRR…LMDDKDKGSS (1021 aa)) lie on the Cytoplasmic side of the membrane. Residues 91 to 116 (WRRVRDEKERSLRAARQLLDDEEQLT) adopt a coiled-coil conformation. An SMP-LTD domain is found at 135–313 (DVEKAEWLNK…LPNRLLVPLV (179 aa)). C2 domains lie at 312–433 (LVPD…DDWF), 460–580 (QVLQ…QLSS), 627–751 (SVDA…DEWL), and 777–899 (LEEV…TLNS). S324 is subject to Phosphoserine; by CDK5. K344, D345, D357, D404, D406, D408, D410, and D411 together coordinate Ca(2+). 3 disordered regions span residues 617-641 (VDSENPQRGSSVDAPPRPCHTTPDS), 813-833 (RKGTKHPSPYATLTVGDTSHK), and 924-950 (SHSYSHSSSSLSEEPELSGGPPHVTSS). Position 817 is an N6-acetyllysine (K817). Phosphoserine occurs at positions 820 and 941. The segment covering 925–946 (HSYSHSSSSLSEEPELSGGPPH) has biased composition (low complexity). T948 bears the Phosphothreonine mark. 2 positions are modified to phosphoserine: S949 and S963. One can recognise a C2 5 domain in the interval 971–1093 (PLGQVKLTVW…DLSQGVARWY (123 aa)). Position 1009 is a phosphotyrosine (Y1009). Residues 1018 to 1025 (KNRGTKRK) form a required for phosphatidylinositol 4,5-bisphosphate-dependent location at the cell membrane region. S1034 carries the phosphoserine modification.

It belongs to the extended synaptotagmin family. As to quaternary structure, interacts with ESYT2 and ESYT3. Interacts with ADGRD1; inhibiting the G-protein-coupled receptor activity of ADGRD1. Interaction with ADGRD1 is abolished when cytosolic calcium increases, relieving ADGRD1 G-protein-coupled receptor activity. Interacts (phosphorylated form) with SLC2A4. Post-translationally, phosphorylated on Ser residues in insulin-treated adipocytes (in vitro); this promotes interaction with SLC2A4.

It is found in the endoplasmic reticulum membrane. It localises to the cell membrane. Binds calcium (via the C2 domains) and translocates to sites of contact between the endoplasmic reticulum and the cell membrane in response to increased cytosolic calcium levels. Helps tether the endoplasmic reticulum to the cell membrane and promotes the formation of appositions between the endoplasmic reticulum and the cell membrane. Acts as an inhibitor of ADGRD1 G-protein-coupled receptor activity in absence of cytosolic calcium. Binds glycerophospholipids in a barrel-like domain and may play a role in cellular lipid transport. The chain is Extended synaptotagmin-1 (ESYT1) from Pongo abelii (Sumatran orangutan).